Reading from the N-terminus, the 85-residue chain is Small ribosomal subunit protein bS16 (85 aa).

The protein belongs to the bacterial ribosomal protein bS16 family.

The chain is Small ribosomal subunit protein bS16 from Clostridium kluyveri (strain NBRC 12016).